We begin with the raw amino-acid sequence, 496 residues long: ATP synthase subunit beta, chloroplastic (496 aa).

An ATP-binding site is contributed by glycine 170 to threonine 177.

It belongs to the ATPase alpha/beta chains family. In terms of assembly, F-type ATPases have 2 components, CF(1) - the catalytic core - and CF(0) - the membrane proton channel. CF(1) has five subunits: alpha(3), beta(3), gamma(1), delta(1), epsilon(1). CF(0) has four main subunits: a(1), b(1), b'(1) and c(9-12).

The protein localises to the plastid. It is found in the chloroplast thylakoid membrane. The catalysed reaction is ATP + H2O + 4 H(+)(in) = ADP + phosphate + 5 H(+)(out). In terms of biological role, produces ATP from ADP in the presence of a proton gradient across the membrane. The catalytic sites are hosted primarily by the beta subunits. The sequence is that of ATP synthase subunit beta, chloroplastic from Trachycarpus fortunei (Chinese windmill palm).